The chain runs to 522 residues: Cytochrome P450 monooxygenase sirB (522 aa).

Residues 22–42 form a helical membrane-spanning segment; it reads ASAILFCTLLTVFLFISQGTV. Asparagine 191 carries an N-linked (GlcNAc...) asparagine glycan. Residues 304–324 traverse the membrane as a helical segment; the sequence is VLHLSFAATGTVAILITHMIY. Position 462 (cysteine 462) interacts with heme.

This sequence belongs to the cytochrome P450 family. Heme serves as cofactor.

It localises to the membrane. It functions in the pathway mycotoxin biosynthesis. Functionally, cytochrome P450 monooxygenase; part of the gene cluster that mediates the biosynthesis of sirodesmin PL, an epipolythiodioxopiperazine (ETP) characterized by a disulfide bridged cyclic dipeptide and that acts as a phytotoxin which is involved in the blackleg didease of canola. SirD catalyzes the O-prenylation of L-tyrosine (L-Tyr) in the presence of dimethylallyl diphosphate (DMAPP) to yield 4-O-dimethylallyl-L-Tyr, and therefore represents probably the first pathway-specific enzyme in the biosynthesis of sirodesmin PL. 4-O-dimethylallyl-L-Tyr, then undergoes condensation with L-Ser in a reaction catalyzed by the non-ribosomal peptide synthase sirP to form the diketopiperazine (DKP) backbone. Further bishydroxylation of the DKP performed by the cytochrome P450 monooxygenase sirC leads to the production of the intermediate phomamide. This step is essential to form the reactive thiol group required for toxicity of sirodesmin PL. The next steps of sirodesmin biosynthesis are not well understood yet, but some predictions could be made from intermediate compounds identification. Phomamide is converted into phomalizarine via oxidation, probably by sirT. Further oxidation, methylation (by sirM or sirN) and reduction steps convert phomalizarine to deacetyl sirodesmin. Finally, acetyltransferase sirH probably acetylates deacetyl sirodesmin to produce sirodesmin PL. The sequence is that of Cytochrome P450 monooxygenase sirB from Leptosphaeria maculans (Blackleg fungus).